A 303-amino-acid chain; its full sequence is CDAN1-interacting nuclease 1 (303 aa).

The protein localises to the nucleus. The protein resides in the cytoplasm. Functionally, may play a role in erythroid cell differentiation. The polypeptide is CDAN1-interacting nuclease 1 (Xenopus laevis (African clawed frog)).